A 48-amino-acid chain; its full sequence is Sperm protamine R3 isoform 2 (48 aa).

Basic residues predominate over residues Ala1–Ser29. A disordered region spans residues Ala1–Pro48.

In terms of tissue distribution, testis.

The protein localises to the nucleus. The protein resides in the chromosome. Its function is as follows. Protamines substitute for histones in the chromatin of sperm during the haploid phase of spermatogenesis. They compact sperm DNA into a highly condensed, stable and inactive complex. The sequence is that of Sperm protamine R3 isoform 2 from Hydrolagus colliei (Spotted ratfish).